A 977-amino-acid polypeptide reads, in one-letter code: Mineralocorticoid receptor (977 aa).

Residues 1 to 19 are compositionally biased toward basic and acidic residues; the sequence is METKGYHSRPEGLDMERRW. Disordered regions lie at residues 1–37 and 231–288; these read METK…AERT and QGTP…VSSP. The tract at residues 1-601 is modulating; the sequence is METKGYHSRP…STGSSRPSKI (601 aa). Residues 231–243 are compositionally biased toward polar residues; the sequence is QGTPLTCSPTVDN. Phosphoserine is present on residues serine 250, serine 259, serine 283, serine 287, and serine 299. The span at 259–288 shows a compositional bias: low complexity; that stretch reads SPLSSPLSSMKSPISSPPSHCSVKSPVSSP. Disordered regions lie at residues 305–327 and 344–368; these read NSRC…SPAA and SGAS…KGAH. Residues cysteine 602, cysteine 605, cysteine 619, cysteine 622, cysteine 638, cysteine 644, cysteine 654, and cysteine 657 each coordinate Zn(2+). 2 consecutive NR C4-type zinc fingers follow at residues 602-622 and 638-662; these read CLVC…CGSC and CAGR…LQKC. The nuclear receptor DNA-binding region spans 602 to 667; it reads CLVCGDGASG…RLQKCLQAGM (66 aa). The tract at residues 668–718 is hinge; sequence NLGARKSKKLGKLKGLHEEQPQQPPPPQSPEEGTTYIAPAKEPSVNTALVP. The tract at residues 682 to 703 is disordered; it reads GLHEEQPQQPPPPQSPEEGTTY. An NR LBD domain is found at 719–957; sequence QLSSISRALT…EFPAMLVEII (239 aa). Positions 763 and 769 each coordinate 21-hydroxyprogesterone. Residues asparagine 763 and glutamine 769 each coordinate aldosterone. Positions 763 and 769 each coordinate progesterone. The interval 775 to 778 is important for coactivator binding; it reads KWAK. Arginine 810 and threonine 938 together coordinate 21-hydroxyprogesterone. Aldosterone-binding residues include arginine 810 and threonine 938. Positions 810 and 938 each coordinate progesterone.

This sequence belongs to the nuclear hormone receptor family. NR3 subfamily.

The protein localises to the cytoplasm. It localises to the nucleus. In terms of biological role, receptor for both mineralocorticoids (MC) such as aldosterone and glucocorticoids (GC) such as corticosterone or cortisol. Binds to mineralocorticoid response elements (MRE) and transactivates target genes. The effect of MC is to increase ion and water transport and thus raise extracellular fluid volume and blood pressure and lower potassium levels. The sequence is that of Mineralocorticoid receptor (NR3C2) from Tupaia belangeri (Common tree shrew).